A 344-amino-acid chain; its full sequence is Ribosomal RNA small subunit methyltransferase H 2 (344 aa).

S-adenosyl-L-methionine-binding positions include 78–80 (GGH), Asp98, Phe131, Asp145, and Gln152.

The protein belongs to the methyltransferase superfamily. RsmH family.

It localises to the cytoplasm. The catalysed reaction is cytidine(1402) in 16S rRNA + S-adenosyl-L-methionine = N(4)-methylcytidine(1402) in 16S rRNA + S-adenosyl-L-homocysteine + H(+). Its function is as follows. Specifically methylates the N4 position of cytidine in position 1402 (C1402) of 16S rRNA. This Acholeplasma laidlawii (strain PG-8A) protein is Ribosomal RNA small subunit methyltransferase H 2.